The primary structure comprises 267 residues: Hydroxyacylglutathione hydrolase (267 aa).

Zn(2+) is bound by residues H55, H57, D59, H60, H121, D138, and H176.

This sequence belongs to the metallo-beta-lactamase superfamily. Glyoxalase II family. Monomer. Zn(2+) is required as a cofactor.

The catalysed reaction is an S-(2-hydroxyacyl)glutathione + H2O = a 2-hydroxy carboxylate + glutathione + H(+). It participates in secondary metabolite metabolism; methylglyoxal degradation; (R)-lactate from methylglyoxal: step 2/2. Functionally, thiolesterase that catalyzes the hydrolysis of S-D-lactoyl-glutathione to form glutathione and D-lactic acid. This is Hydroxyacylglutathione hydrolase from Shewanella oneidensis (strain ATCC 700550 / JCM 31522 / CIP 106686 / LMG 19005 / NCIMB 14063 / MR-1).